Reading from the N-terminus, the 505-residue chain is MSEQNAQGADEVVDLNNEMKARREKLAALREQGIPFPNDFRRDRTSDQLHAEFDAKEAEELEALNIEVSVAGRMMTRRIMGKASFVTLQDVGGRIQLYVARDDLPEGVYNEQFKKWDLGDILGAKGKLFKTKTGELSIHCTELRLLTKALRPLPDKFHGLQDQEARYRQRYLDLISNDESRNTFKTRSKILAGIRQFMVARGFMEVETPMMQVIPGGASARPFITHHNALDLDMYLRIAPELYLKRLVVGGFERVFEINRNFRNEGISVRHNPEFTMMELYMAYADYKDLIELTESLFRTLAQDVLGTTQVPYGDEVFDFGKPFEKLTMREAIKKYRPETDMADLGNFDSAKAVAESIGIHVEKSWGLGRIVTEIFDEVAEAHLIQPTFITEYPAEVSPLARRNDVNPEITDRFEFFIGGREIGNGFSELNDAEDQAQRFLDQVNAKAAGDDEAMFYDEDYVTALEHGLPPTAGLGIGIDRMVMLFTNSHTIRDVILFPAMRPVK.

2 residues coordinate Mg(2+): glutamate 415 and glutamate 422.

The protein belongs to the class-II aminoacyl-tRNA synthetase family. In terms of assembly, homodimer. The cofactor is Mg(2+).

The protein localises to the cytoplasm. The enzyme catalyses tRNA(Lys) + L-lysine + ATP = L-lysyl-tRNA(Lys) + AMP + diphosphate. The polypeptide is Lysine--tRNA ligase (Salmonella paratyphi C (strain RKS4594)).